The sequence spans 511 residues: Activin receptor type-2B (511 aa).

Positions Met-1–Ser-20 are cleaved as a signal peptide. The Extracellular portion of the chain corresponds to Gly-21 to Asn-136. Cys-30 and Cys-61 are joined by a disulfide. N-linked (GlcNAc...) asparagine glycosylation is found at Asn-43 and Asn-67. 3 cysteine pairs are disulfide-bonded: Cys-86–Cys-105, Cys-92–Cys-104, and Cys-106–Cys-111. A helical membrane pass occupies residues Ile-137 to Trp-157. Residues Met-158 to Ile-511 are Cytoplasmic-facing. The Protein kinase domain maps to Leu-189–Ile-477. ATP is bound by residues Lys-195–Val-203 and Lys-216. Asp-320 functions as the Proton acceptor in the catalytic mechanism.

This sequence belongs to the protein kinase superfamily. TKL Ser/Thr protein kinase family. TGFB receptor subfamily.

The protein localises to the membrane. The enzyme catalyses L-threonyl-[receptor-protein] + ATP = O-phospho-L-threonyl-[receptor-protein] + ADP + H(+). It catalyses the reaction L-seryl-[receptor-protein] + ATP = O-phospho-L-seryl-[receptor-protein] + ADP + H(+). Functionally, receptor for activin A, activin B and inhibin A. Involved in transmembrane signaling. This Xenopus laevis (African clawed frog) protein is Activin receptor type-2B (acvr2b).